The following is a 388-amino-acid chain: Methylthioribose-1-phosphate isomerase (388 aa).

Residue aspartate 253 is the Proton donor of the active site.

The protein belongs to the eIF-2B alpha/beta/delta subunits family. MtnA subfamily.

It localises to the cytoplasm. The protein resides in the nucleus. It catalyses the reaction 5-(methylsulfanyl)-alpha-D-ribose 1-phosphate = 5-(methylsulfanyl)-D-ribulose 1-phosphate. The protein operates within amino-acid biosynthesis; L-methionine biosynthesis via salvage pathway; L-methionine from S-methyl-5-thio-alpha-D-ribose 1-phosphate: step 1/6. Functionally, catalyzes the interconversion of methylthioribose-1-phosphate (MTR-1-P) into methylthioribulose-1-phosphate (MTRu-1-P). This is Methylthioribose-1-phosphate isomerase from Fusarium vanettenii (strain ATCC MYA-4622 / CBS 123669 / FGSC 9596 / NRRL 45880 / 77-13-4) (Fusarium solani subsp. pisi).